A 343-amino-acid polypeptide reads, in one-letter code: MNNKMLGVIDATTYIEALEPLIEQRSIAAVPFAGRYRLIDFVLSSMVNSGIESVAIFPKYQYRSLMDHLGSGKNWDLNRKRDGLFFFPSPDLLFSGERRVGAFAHFEQHIDYFLRSRQKYAVIANGYTVCNIDFDAVLNRHIENGCDVTEIRHRGRSLEMYLLETSLLLDLIADYKNHGYYSIVDVIRDYHRSLSICEYEYSGYAAVIDSVEQYFRSSMELLDRDVWEQLFLPSHPIYTKVKDEPPTKYGREGNVKRSMIANGCVIEGTVENSVLFRSVKIGKGAVVRNSIIMQKCQIGDGCVLDGVIIDKDAKVEPGVVLKGTKEQPFIVRKGTVQGEVISR.

Belongs to the bacterial/plant glucose-1-phosphate adenylyltransferase family.

In terms of biological role, required for the synthesis of glycogen. This chain is Glycogen biosynthesis protein GlgD (glgD), found in Geobacillus stearothermophilus (Bacillus stearothermophilus).